The primary structure comprises 293 residues: MNAIANLAATLRADLGECLADLAVDALIDEAELSPKPALVDRRGNGAHADLHLGLMQASALSLWPCFKEMADAAQRHGRIDARLRGVLGQLGRDGEAAMLRTTEGVNTHRGAIWALGLLVAAAALEPRRTQAGEVAARAGRIALLDDPAAAIGDSHGERVRRRYGVGGAREEARLGFPRAVRHGLPQLWRSREGGAGEQNARLDALLAIMSVLDDTCVLHRAGRVGLAAMQDGARAVLAAGGSASLAGRRRLCELDRRLLALNASPGGAADLLAACLFLDRLPAVSGGWAGSL.

Belongs to the CitG/MdcB family.

The enzyme catalyses 3'-dephospho-CoA + ATP = 2'-(5''-triphospho-alpha-D-ribosyl)-3'-dephospho-CoA + adenine. In terms of biological role, involved in the formation of 2-(5''-phosphoribosyl)-3'-dephosphocoenzyme-A, the prosthetic group of the acyl-carrier protein of the malonate decarboxylase. The polypeptide is Probable 2-(5''-triphosphoribosyl)-3'-dephosphocoenzyme-A synthase (Pseudomonas aeruginosa (strain UCBPP-PA14)).